The primary structure comprises 460 residues: Bifunctional protein GlmU (460 aa).

Residues 1 to 229 (MTNYAIILAA…FNESLGVNDR (229 aa)) form a pyrophosphorylase region. Residues 8–11 (LAAG), Lys-22, Gln-72, and 77–78 (GT) contribute to the UDP-N-acetyl-alpha-D-glucosamine site. A Mg(2+)-binding site is contributed by Asp-102. The UDP-N-acetyl-alpha-D-glucosamine site is built by Gly-139, Glu-154, Asn-169, and Asn-227. Position 227 (Asn-227) interacts with Mg(2+). The tract at residues 230–250 (VALATAETVMRQRITQKHMVN) is linker. The segment at 251 to 460 (GVTFQNPETV…RLAHHPSRSK (210 aa)) is N-acetyltransferase. Arg-332 and Lys-350 together coordinate UDP-N-acetyl-alpha-D-glucosamine. Catalysis depends on His-362, which acts as the Proton acceptor. UDP-N-acetyl-alpha-D-glucosamine contacts are provided by Tyr-365 and Asn-376. Acetyl-CoA contacts are provided by residues Ala-379, 385 to 386 (NY), Ser-404, Ala-422, and Arg-439.

In the N-terminal section; belongs to the N-acetylglucosamine-1-phosphate uridyltransferase family. It in the C-terminal section; belongs to the transferase hexapeptide repeat family. In terms of assembly, homotrimer. Mg(2+) serves as cofactor.

The protein localises to the cytoplasm. It catalyses the reaction alpha-D-glucosamine 1-phosphate + acetyl-CoA = N-acetyl-alpha-D-glucosamine 1-phosphate + CoA + H(+). The catalysed reaction is N-acetyl-alpha-D-glucosamine 1-phosphate + UTP + H(+) = UDP-N-acetyl-alpha-D-glucosamine + diphosphate. It participates in nucleotide-sugar biosynthesis; UDP-N-acetyl-alpha-D-glucosamine biosynthesis; N-acetyl-alpha-D-glucosamine 1-phosphate from alpha-D-glucosamine 6-phosphate (route II): step 2/2. The protein operates within nucleotide-sugar biosynthesis; UDP-N-acetyl-alpha-D-glucosamine biosynthesis; UDP-N-acetyl-alpha-D-glucosamine from N-acetyl-alpha-D-glucosamine 1-phosphate: step 1/1. It functions in the pathway bacterial outer membrane biogenesis; LPS lipid A biosynthesis. Its function is as follows. Catalyzes the last two sequential reactions in the de novo biosynthetic pathway for UDP-N-acetylglucosamine (UDP-GlcNAc). The C-terminal domain catalyzes the transfer of acetyl group from acetyl coenzyme A to glucosamine-1-phosphate (GlcN-1-P) to produce N-acetylglucosamine-1-phosphate (GlcNAc-1-P), which is converted into UDP-GlcNAc by the transfer of uridine 5-monophosphate (from uridine 5-triphosphate), a reaction catalyzed by the N-terminal domain. In Streptococcus pyogenes serotype M12 (strain MGAS9429), this protein is Bifunctional protein GlmU.